Reading from the N-terminus, the 464-residue chain is Glutamate--tRNA ligase (464 aa).

A 'HIGH' region motif is present at residues 10–20 (PSPTGHLHLGG). Residues C99, C101, C126, and E128 each contribute to the Zn(2+) site. The short motif at 236–240 (KLSKR) is the 'KMSKS' region element. An ATP-binding site is contributed by K239.

It belongs to the class-I aminoacyl-tRNA synthetase family. Glutamate--tRNA ligase type 1 subfamily. As to quaternary structure, monomer. Requires Zn(2+) as cofactor.

It localises to the cytoplasm. It catalyses the reaction tRNA(Glu) + L-glutamate + ATP = L-glutamyl-tRNA(Glu) + AMP + diphosphate. Catalyzes the attachment of glutamate to tRNA(Glu) in a two-step reaction: glutamate is first activated by ATP to form Glu-AMP and then transferred to the acceptor end of tRNA(Glu). This Oleidesulfovibrio alaskensis (strain ATCC BAA-1058 / DSM 17464 / G20) (Desulfovibrio alaskensis) protein is Glutamate--tRNA ligase.